Consider the following 562-residue polypeptide: Arginine--tRNA ligase (562 aa).

A 'HIGH' region motif is present at residues 136-146 (ANPTGPMHMGN).

It belongs to the class-I aminoacyl-tRNA synthetase family. Monomer.

The protein resides in the cytoplasm. It catalyses the reaction tRNA(Arg) + L-arginine + ATP = L-arginyl-tRNA(Arg) + AMP + diphosphate. This Caldanaerobacter subterraneus subsp. tengcongensis (strain DSM 15242 / JCM 11007 / NBRC 100824 / MB4) (Thermoanaerobacter tengcongensis) protein is Arginine--tRNA ligase (argS).